The primary structure comprises 216 residues: GTP-binding nuclear protein Ran, testis-specific isoform (216 aa).

Position 2 is an N-acetylalanine (Ala2). The Small GTPase Ran-type domain occupies 7–171; it reads PQIQFKLVLV…FWLARKLIGD (165 aa). GTP is bound at residue 17–24; it reads GDGGTGKT. Thr24 carries the phosphothreonine modification. The interval 37–45 is switch-I; the sequence is KEYVATLGV. Position 60 is an N6-acetyllysine (Lys60). Position 65-69 (65-69) interacts with GTP; that stretch reads DTAGQ. The switch-II stretch occupies residues 68-84; sequence GQEKFGGLRDGYYIQAQ. Position 71 is an N6-acetyllysine; alternate (Lys71). Lys71 participates in a covalent cross-link: Glycyl lysine isopeptide (Lys-Gly) (interchain with G-Cter in SUMO2); alternate. Lys71 is covalently cross-linked (Glycyl lysine isopeptide (Lys-Gly) (interchain with G-Cter in ubiquitin); alternate). Lys99 carries the post-translational modification N6-acetyllysine. 122–125 serves as a coordination point for GTP; it reads NKVD. Lys134 bears the N6-acetyllysine mark. Residue Lys152 forms a Glycyl lysine isopeptide (Lys-Gly) (interchain with G-Cter in SUMO2) linkage. Lys159 bears the N6-acetyllysine; alternate mark. N6-succinyllysine; alternate is present on Lys159.

Belongs to the small GTPase superfamily. Ran family. Testis specific.

The protein localises to the nucleus. The catalysed reaction is GTP + H2O = GDP + phosphate + H(+). GTP-binding protein involved in nucleocytoplasmic transport. Required for the import of protein into the nucleus and also for RNA export. Involved in chromatin condensation and control of cell cycle. The chain is GTP-binding nuclear protein Ran, testis-specific isoform (Rasl2-9) from Rattus norvegicus (Rat).